Consider the following 705-residue polypeptide: Fatty acid oxidation complex subunit alpha (705 aa).

The segment at 1–190 is enoyl-CoA hydratase; sequence MSEQKAFNLK…KLGVVDACVP (190 aa). The tract at residues 308-705 is 3-hydroxyacyl-CoA dehydrogenase; the sequence is SKVGMVGVLG…AGEGRRFYDN (398 aa).

In the N-terminal section; belongs to the enoyl-CoA hydratase/isomerase family. This sequence in the central section; belongs to the 3-hydroxyacyl-CoA dehydrogenase family. Heterotetramer of two alpha chains (FadJ) and two beta chains (FadI).

It localises to the cytoplasm. The catalysed reaction is a (3S)-3-hydroxyacyl-CoA = a (2E)-enoyl-CoA + H2O. It carries out the reaction a 4-saturated-(3S)-3-hydroxyacyl-CoA = a (3E)-enoyl-CoA + H2O. It catalyses the reaction a (3S)-3-hydroxyacyl-CoA + NAD(+) = a 3-oxoacyl-CoA + NADH + H(+). The enzyme catalyses (3S)-3-hydroxybutanoyl-CoA = (3R)-3-hydroxybutanoyl-CoA. It participates in lipid metabolism; fatty acid beta-oxidation. Its function is as follows. Catalyzes the formation of a hydroxyacyl-CoA by addition of water on enoyl-CoA. Also exhibits 3-hydroxyacyl-CoA epimerase and 3-hydroxyacyl-CoA dehydrogenase activities. The chain is Fatty acid oxidation complex subunit alpha from Vibrio vulnificus (strain CMCP6).